A 285-amino-acid chain; its full sequence is Protein phosphatase 1 regulatory subunit 3C (285 aa).

A PP1-binding motif motif is present at residues 72-75 (KVVF). In terms of domain architecture, CBM21 spans 133-241 (RKRLMKNSVC…NNNGKNYALV (109 aa)).

Interacts with PPP1CC catalytic subunit of PP1 and associates with glycogen. Forms complexes with glycogen phosphorylase, glycogen synthase and phosphorylase kinase which is necessary for its regulation of PP1 activity. Ubiquitously expressed in the examined tissues including brain, muscle, liver and spleen under normoxic condition. Its expression is higher in insulin sensitive tissues (liver and muscle) than in the brain and spleen. Significantly increased expression in the liver and muscle under short-term (1-12 hours) hypoxia exposure. Significantly increased expression after long-term (natural) hypoxia exposure in liver and spleen. No significant differences in expression in brain for any time periods.

Acts as a glycogen-targeting subunit for PP1 and regulates its activity. Activates glycogen synthase, reduces glycogen phosphorylase activity and limits glycogen breakdown. This Clarias batrachus (Walking catfish) protein is Protein phosphatase 1 regulatory subunit 3C.